Here is a 516-residue protein sequence, read N- to C-terminus: Myocyte-specific enhancer factor 2A homolog (516 aa).

An interaction with hdac9 region spans residues 1–100 (MGRKKIQITR…KGLNGCESPD (100 aa)). Residues 3–57 (RKKIQITRIMDERNRQVTFTKRKFGLMKKAYELSVLCDCEIALIIFNSSNKLFQY) enclose the MADS-box domain. The mef2-type DNA-binding region spans 58 to 86 (ASTDMDKVLLKYTEYNEPHESRTNSDIVE). Residues 318-339 (PSSKGMMPPLNTQRVTSSQGTQ) are disordered. A compositionally biased stretch (polar residues) spans 327–339 (LNTQRVTSSQGTQ). Residue threonine 343 is modified to Phosphothreonine; by NLK. Serine 386 bears the Phosphoserine; by NLK mark. The span at 420-433 (GSNLSINTNQNINI) shows a compositional bias: polar residues. Residues 420–516 (GSNLSINTNQ…KRMRMDAWVT (97 aa)) form a disordered region. Residues 465–475 (DSLSSSSSSYD) are compositionally biased toward low complexity. 2 stretches are compositionally biased toward basic and acidic residues: residues 476-486 (GSDREDVRNDF) and 497-516 (NNED…AWVT).

It belongs to the MEF2 family. As to quaternary structure, interacts with hdac9 and nlk2. Restricted to the somitic mesoderm of early embryos. Expressed in the head region of neurula stage embryos and in body muscle (myotomes) of the tadpole. Expressed in all tissues examined in the adult.

It is found in the nucleus. May regulate muscle-specific transcription in the embryo and may regulate transcription of a variety of cell types in the adult. Binds to the sequence 5'-CTA[TA]4TAR-3'. Acts downstream of nlk2 in anterior neural development, including eye formation. This Xenopus laevis (African clawed frog) protein is Myocyte-specific enhancer factor 2A homolog (mef2a).